We begin with the raw amino-acid sequence, 117 residues long: Immunoglobulin heavy variable 1-84 (117 aa).

The N-terminal stretch at 1–19 is a signal peptide; that stretch reads MGWSWIFLFLLSGTAGVHC. The tract at residues 20–49 is framework-1; that stretch reads QIQLQQSGPELVKPGASVKISCKASGYTFT. Residues 31 to 117 enclose the Ig-like domain; that stretch reads VKPGASVKIS…EDSAVYFCAR (87 aa). Cysteines 41 and 115 form a disulfide. The segment at 50-54 is complementarity-determining-1; sequence DYYIN. The tract at residues 55–68 is framework-2; that stretch reads WVKQRPGQGLEWIG. The interval 69 to 85 is complementarity-determining-2; that stretch reads WIYPGSGNTKYNEKFKG. A framework-3 region spans residues 86–117; the sequence is KATLTVDTSSSTAYMQLSSLTSEDSAVYFCAR.

In Mus musculus (Mouse), this protein is Immunoglobulin heavy variable 1-84.